The primary structure comprises 196 residues: Dephospho-CoA kinase (196 aa).

The DPCK domain occupies 5 to 196 (IIGLTGGIAT…QVDIALNFEL (192 aa)). 13-18 (ATGKTT) provides a ligand contact to ATP.

It belongs to the CoaE family.

Its subcellular location is the cytoplasm. The enzyme catalyses 3'-dephospho-CoA + ATP = ADP + CoA + H(+). Its pathway is cofactor biosynthesis; coenzyme A biosynthesis; CoA from (R)-pantothenate: step 5/5. Its function is as follows. Catalyzes the phosphorylation of the 3'-hydroxyl group of dephosphocoenzyme A to form coenzyme A. The chain is Dephospho-CoA kinase from Nostoc sp. (strain PCC 7120 / SAG 25.82 / UTEX 2576).